Here is a 235-residue protein sequence, read N- to C-terminus: MKVIKVENQVQGGKVAFEILKEKLANGAQTLGLATGSSPLEFYKEIVESNLDFSNLTSVNLDEYVGLDGDNPQSYRYFMQENLFNQKPFKESFLPRGVKDNAEAEVERYNQILADHPVDLQILGIGRNGHIGFNEPGTPFDSQTHLVELDQSTIEANARFFAKIEDVPTQAISMGIKNILDAKSIILFAYGESKAEAIAGTVSGPVTENLPASSLQNHPDVTIIADAEALSLLEK.

Asp62 (proton acceptor; for enolization step) is an active-site residue. Residue Asn128 is the For ring-opening step of the active site. The active-site Proton acceptor; for ring-opening step is His130. The For ring-opening step role is filled by Glu135.

This sequence belongs to the glucosamine/galactosamine-6-phosphate isomerase family. NagB subfamily.

The catalysed reaction is alpha-D-glucosamine 6-phosphate + H2O = beta-D-fructose 6-phosphate + NH4(+). Its pathway is amino-sugar metabolism; N-acetylneuraminate degradation; D-fructose 6-phosphate from N-acetylneuraminate: step 5/5. Catalyzes the reversible isomerization-deamination of glucosamine 6-phosphate (GlcN6P) to form fructose 6-phosphate (Fru6P) and ammonium ion. The sequence is that of Glucosamine-6-phosphate deaminase from Streptococcus pneumoniae serotype 2 (strain D39 / NCTC 7466).